The following is a 96-amino-acid chain: Putative pterin-4-alpha-carbinolamine dehydratase (96 aa).

The protein belongs to the pterin-4-alpha-carbinolamine dehydratase family.

The catalysed reaction is (4aS,6R)-4a-hydroxy-L-erythro-5,6,7,8-tetrahydrobiopterin = (6R)-L-erythro-6,7-dihydrobiopterin + H2O. This is Putative pterin-4-alpha-carbinolamine dehydratase from Herpetosiphon aurantiacus (strain ATCC 23779 / DSM 785 / 114-95).